We begin with the raw amino-acid sequence, 490 residues long: Betaine aldehyde dehydrogenase (490 aa).

Positions 26, 27, and 93 each coordinate K(+). 150 to 152 is a binding site for NAD(+); sequence GAW. Lys162 acts as the Charge relay system in catalysis. 176–179 contacts NAD(+); it reads KPSE. Position 180 (Val180) interacts with K(+). 230 to 233 contributes to the NAD(+) binding site; sequence GVAS. Leu246 lines the K(+) pocket. Glu252 serves as the catalytic Proton acceptor. Gly254, Cys286, and Glu387 together coordinate NAD(+). Cys286 acts as the Nucleophile in catalysis. Cys286 bears the Cysteine sulfenic acid (-SOH) mark. Positions 457 and 460 each coordinate K(+). The active-site Charge relay system is the Glu464.

This sequence belongs to the aldehyde dehydrogenase family. As to quaternary structure, dimer of dimers. K(+) serves as cofactor.

The enzyme catalyses betaine aldehyde + NAD(+) + H2O = glycine betaine + NADH + 2 H(+). It functions in the pathway amine and polyamine biosynthesis; betaine biosynthesis via choline pathway; betaine from betaine aldehyde: step 1/1. Involved in the biosynthesis of the osmoprotectant glycine betaine. Catalyzes the irreversible oxidation of betaine aldehyde to the corresponding acid. The sequence is that of Betaine aldehyde dehydrogenase from Escherichia coli O6:H1 (strain CFT073 / ATCC 700928 / UPEC).